Consider the following 516-residue polypeptide: 2,3-bisphosphoglycerate-independent phosphoglycerate mutase (516 aa).

Mn(2+) is bound by residues D14 and S64. S64 serves as the catalytic Phosphoserine intermediate. Substrate contacts are provided by residues H125, 155-156 (RD), R187, R193, 263-266 (RPDR), and K337. Mn(2+) is bound by residues D404, H408, D445, H446, and H464.

Belongs to the BPG-independent phosphoglycerate mutase family. In terms of assembly, monomer. Requires Mn(2+) as cofactor.

It catalyses the reaction (2R)-2-phosphoglycerate = (2R)-3-phosphoglycerate. Its pathway is carbohydrate degradation; glycolysis; pyruvate from D-glyceraldehyde 3-phosphate: step 3/5. Functionally, catalyzes the interconversion of 2-phosphoglycerate and 3-phosphoglycerate. In Saccharophagus degradans (strain 2-40 / ATCC 43961 / DSM 17024), this protein is 2,3-bisphosphoglycerate-independent phosphoglycerate mutase.